The primary structure comprises 500 residues: Lysine--tRNA ligase (500 aa).

Mg(2+) is bound by residues Glu-411 and Glu-418.

The protein belongs to the class-II aminoacyl-tRNA synthetase family. Homodimer. It depends on Mg(2+) as a cofactor.

The protein resides in the cytoplasm. The enzyme catalyses tRNA(Lys) + L-lysine + ATP = L-lysyl-tRNA(Lys) + AMP + diphosphate. This Azoarcus sp. (strain BH72) protein is Lysine--tRNA ligase.